We begin with the raw amino-acid sequence, 612 residues long: Rhotekin-2 (612 aa).

Positions 3 to 79 (IKRKKIRESA…LRSQMGESNT (77 aa)) constitute an REM-1 domain. In terms of domain architecture, PH spans 285-392 (DEAMMGFLNQ…WMEAFWQHFY (108 aa)). Disordered stretches follow at residues 483–530 (RNKP…SDKE) and 574–612 (ENKAELDTGTQEPIKPVPTPRQKSLREKLDPRVWLQSQV). The segment covering 486–498 (PPLLSSDDPSTSS) has biased composition (low complexity).

This is Rhotekin-2 (rtkn2) from Xenopus laevis (African clawed frog).